A 556-amino-acid polypeptide reads, in one-letter code: Glucose-6-phosphate isomerase (556 aa).

Residue Glu364 is the Proton donor of the active site. Residues His395 and Lys521 contribute to the active site.

This sequence belongs to the GPI family.

It is found in the cytoplasm. It carries out the reaction alpha-D-glucose 6-phosphate = beta-D-fructose 6-phosphate. It functions in the pathway carbohydrate biosynthesis; gluconeogenesis. It participates in carbohydrate degradation; glycolysis; D-glyceraldehyde 3-phosphate and glycerone phosphate from D-glucose: step 2/4. In terms of biological role, catalyzes the reversible isomerization of glucose-6-phosphate to fructose-6-phosphate. The protein is Glucose-6-phosphate isomerase of Corynebacterium kroppenstedtii (strain DSM 44385 / JCM 11950 / CIP 105744 / CCUG 35717).